Here is a 461-residue protein sequence, read N- to C-terminus: ADP-specific phosphofructokinase (461 aa).

An ADPK domain is found at Met1 to Glu457. Glu268, Glu298, and Asp441 together coordinate Mg(2+). The active-site Proton acceptor is the Asp441.

Belongs to the carbohydrate kinase PfkC family. Requires Mg(2+) as cofactor.

It is found in the cytoplasm. The catalysed reaction is beta-D-fructose 6-phosphate + ADP = beta-D-fructose 1,6-bisphosphate + AMP + H(+). It participates in carbohydrate degradation; glycolysis. In terms of biological role, catalyzes the phosphorylation of fructose 6-phosphate to fructose 1,6-bisphosphate using ADP as the phosphate donor. In Thermococcus zilligii, this protein is ADP-specific phosphofructokinase.